Reading from the N-terminus, the 359-residue chain is Putative cyclin-F1-2 (359 aa).

It belongs to the cyclin family. Cyclin F subfamily.

This Oryza sativa subsp. japonica (Rice) protein is Putative cyclin-F1-2 (CYCF1-2).